We begin with the raw amino-acid sequence, 923 residues long: Calmodulin-binding transcription activator 5 (923 aa).

Residues 25 to 151 (IQTMLDEAYS…YRETHEVHAA (127 aa)) constitute a DNA-binding region (CG-1). A transcription activation region spans residues 272 to 372 (VYQNNNSCGA…HSHSDIPEQV (101 aa)). The stretch at 611 to 640 (QGWTALHWAAYYGREKMVAALLSAGARPNL) is one ANK repeat. IQ domains follow at residues 757-786 (NIIA…IQYR), 799-828 (MRKK…SVGV), and 875-904 (LERS…AHEE). Residues 824–846 (WSVGVLEKAILRWRLKRKGFRGL) are calmodulin-binding. A coiled-coil region spans residues 887 to 914 (RSKKAQQDYRRMKLAHEEAQLEYDGMQE).

This sequence belongs to the CAMTA family. As to expression, expressed in roots, stems, leaves, pollen, top of sepals and siliques.

The protein localises to the nucleus. Transcription activator. Binds to the DNA consensus sequence 5'-[ACG]CGCG[GTC]-3'. Regulates transcriptional activity in response to calcium signals. Binds calmodulin in a calcium-dependent manner. Involved in response to cold. Contributes together with CAMTA3 to the positive regulation of the cold-induced expression of DREB1A/CBF3, DREB1B/CBF1 and DREB1C/CBF2. This Arabidopsis thaliana (Mouse-ear cress) protein is Calmodulin-binding transcription activator 5.